Consider the following 1772-residue polypeptide: Gag-Pro-Pol polyprotein (1772 aa).

Gly2 is lipidated: N-myristoyl glycine; by host. A propeptide spanning residues 101–162 (AAVAQTEEIL…TKKPKRFPVL (62 aa)) is cleaved from the precursor. A compositionally biased stretch (polar residues) spans 113–126 (SSHTELTTKPSQNP). The segment at 113 to 149 (SSHTELTTKPSQNPDLDLISLDSDDEGAKGSSLKDKN) is disordered. The segment covering 138–149 (EGAKGSSLKDKN) has biased composition (basic and acidic residues). Residues 203 to 206 (PPPY) carry the PPXY motif motif. The short motif at 211-214 (PSAP) is the PTAP/PSAP motif element. Residues 217-258 (MAVVNPKEELKEKIAQLEEQIKLEELHQALISKLQKLKTGNE) are a coiled coil. Residues 258-282 (ETVTSPETAGGFSRTPHWPGQHIPK) form a disordered region. A CCHC-type zinc finger spans residues 548 to 565 (GCCFKCGRKGHFAKNCHE). The disordered stretch occupies residues 593-626 (KSKTDSQGNPLPPHQGNRTEGPAPGPETSLWGGQ). Positions 781–857 (FTGLIDTGAD…LPVNLWGRDL (77 aa)) constitute a Peptidase A2 domain. Catalysis depends on Asp786, which acts as the Protease; shared with dimeric partner. A G-patch domain is found at 868–914 (PSDIVTAQMLAQGYSPGKGLGKNENGILHPIPNQGQFDKKGFGNFLT). Residues 960 to 1148 (LEAGHITESN…DPYTYLGFEL (189 aa)) enclose the Reverse transcriptase domain. The Mg(2+) site is built by Asp1025, Asp1100, Asp1101, Asp1371, Glu1400, Asp1421, and Asp1485. The region spanning 1362-1493 (LNNALLVFTD…ADLATKTVAS (132 aa)) is the RNase H type-1 domain. The segment at 1497-1538 (TNLESAQNAHTLHHLNAQTLKLMFNIPREQARQIVRQCPICA) adopts an Integrase-type zinc-finger fold. The Zn(2+) site is built by His1506, His1510, Cys1534, and Cys1537. Residues 1551–1720 (RGLLPNMIWQ…NPRKQFAMVK (170 aa)) enclose the Integrase catalytic domain. Mg(2+) contacts are provided by Asp1562, Asp1619, and Glu1655. The integrase-type DNA-binding region spans 1717-1766 (AMVKWKDPLDNTWPWPDPVIIWGRGSVCVYSQTHDAARWLPERLVKQIPN).

Belongs to the retroviral Pol polyprotein family. As to quaternary structure, homodimer. Interacts with the G-patch peptide. In terms of assembly, interacts with the reverse transcriptase/ribonuclease H. As to quaternary structure, homotrimer. Mg(2+) serves as cofactor. Post-translationally, released by autocatalytic processing. The protease can undergo further autoprocessing to yield 2 shorter but enzymatically active forms of 12 kDa and 13 kDa. Myristoylated. Myristoylation of the matrix (MA) domain mediates the transport and binding of Gag polyproteins to the host plasma membrane and is required for the assembly of viral particles. In terms of processing, specific enzymatic cleavages in vivo yield mature proteins.

The protein localises to the virion. The catalysed reaction is DNA(n) + a 2'-deoxyribonucleoside 5'-triphosphate = DNA(n+1) + diphosphate. It catalyses the reaction Endonucleolytic cleavage to 5'-phosphomonoester.. The enzyme catalyses dUTP + H2O = dUMP + diphosphate + H(+). Matrix protein. Its function is as follows. Nucleocapsid protein p14: Nucleocapsid protein. Functionally, capsid protein. In terms of biological role, the aspartyl protease mediates proteolytic cleavages of Gag and Gag-Pol polyproteins during or shortly after the release of the virion from the plasma membrane. Cleavages take place as an ordered, step-wise cascade to yield mature proteins. This process is called maturation. Displays maximal activity during the budding process just prior to particle release from the cell. Enhances the activity of the reverse transcriptase. May be part of the mature RT. Its function is as follows. RT is a multifunctional enzyme that converts the viral dimeric RNA genome into dsDNA in the cytoplasm, shortly after virus entry into the cell. This enzyme displays a DNA polymerase activity that can copy either DNA or RNA templates, and a ribonuclease H (RNase H) activity that cleaves the RNA strand of RNA-DNA heteroduplexes in a partially processive 3' to 5' endonucleasic mode. Conversion of viral genomic RNA into dsDNA requires many steps. A tRNA binds to the primer-binding site (PBS) situated at the 5' end of the viral RNA. RT uses the 3' end of the tRNA primer to perfom a short round of RNA-dependent minus-strand DNA synthesis. The reading proceeds through the U5 region and ends after the repeated (R) region which is present at both ends of viral RNA. The portion of the RNA-DNA heteroduplex is digested by the RNase H, resulting in a ssDNA product attached to the tRNA primer. This ssDNA/tRNA hybridizes with the identical R region situated at the 3' end of viral RNA. This template exchange, known as minus-strand DNA strong stop transfer, can be either intra- or intermolecular. RT uses the 3' end of this newly synthesized short ssDNA to perfom the RNA-dependent minus-strand DNA synthesis of the whole template. RNase H digests the RNA template except for a polypurine tract (PPT) situated at the 5' end of the genome. It is not clear if both polymerase and RNase H activities are simultaneous. RNase H probably can proceed both in a polymerase-dependent (RNA cut into small fragments by the same RT performing DNA synthesis) and a polymerase-independent mode (cleavage of remaining RNA fragments by free RTs). Secondly, RT performs DNA-directed plus-strand DNA synthesis using the PPT that has not been removed by RNase H as primers. PPT and tRNA primers are then removed by RNase H. The 3' and 5' ssDNA PBS regions hybridize to form a circular dsDNA intermediate. Strand displacement synthesis by RT to the PBS and PPT ends produces a blunt ended, linear dsDNA copy of the viral genome that includes long terminal repeats (LTRs) at both ends. Functionally, catalyzes viral DNA integration into the host chromosome, by performing a series of DNA cutting and joining reactions. The protein is Gag-Pro-Pol polyprotein (pol) of Macaca mulatta (Rhesus macaque).